A 380-amino-acid chain; its full sequence is MYG1 exonuclease (380 aa).

A mitochondrion-targeting transit peptide spans 1–46 (MGRRFLRGILTLPLRSVLQAQHRMLGSEQDPPAKRPRNNLMAPPRI). 2 positions are modified to N6-acetyllysine: Lys-266 and Lys-272.

It belongs to the MYG1 family. As to expression, ubiquitously expressed, with highest levels in testis.

It localises to the nucleus. Its subcellular location is the nucleoplasm. The protein resides in the mitochondrion matrix. It is found in the nucleolus. In terms of biological role, 3'-5' RNA exonuclease which cleaves in situ on specific transcripts in both nucleus and mitochondrion. Involved in regulating spatially segregated organellar RNA processing, acts as a coordinator of nucleo-mitochondrial crosstalk. In nucleolus, processes pre-ribosomal RNA involved in ribosome assembly and alters cytoplasmic translation. In mitochondrial matrix, processes 3'-termini of the mito-ribosomal and messenger RNAs and controls translation of mitochondrial proteins. This is MYG1 exonuclease from Mus musculus (Mouse).